The primary structure comprises 207 residues: ATP synthase subunit 5, mitochondrial (207 aa).

The protein belongs to the ATPase delta chain family. As to quaternary structure, F-type ATPases have 2 components, CF(1) - the catalytic core - and CF(0) - the membrane proton channel. CF(1) has five subunits: alpha(3), beta(3), gamma(1), delta(1), epsilon(1). CF(0) has three main subunits: a, b and c.

The protein resides in the mitochondrion. It is found in the mitochondrion inner membrane. Its function is as follows. Mitochondrial membrane ATP synthase (F(1)F(0) ATP synthase or Complex V) produces ATP from ADP in the presence of a proton gradient across the membrane which is generated by electron transport complexes of the respiratory chain. F-type ATPases consist of two structural domains, F(1) - containing the extramembraneous catalytic core and F(0) - containing the membrane proton channel, linked together by a central stalk and a peripheral stalk. During catalysis, ATP synthesis in the catalytic domain of F(1) is coupled via a rotary mechanism of the central stalk subunits to proton translocation. Part of the complex F(0) domain and the peripheric stalk, which acts as a stator to hold the catalytic alpha(3)beta(3) subcomplex and subunit a/ATP6 static relative to the rotary elements. The sequence is that of ATP synthase subunit 5, mitochondrial (ATP5) from Candida glabrata (strain ATCC 2001 / BCRC 20586 / JCM 3761 / NBRC 0622 / NRRL Y-65 / CBS 138) (Yeast).